The chain runs to 861 residues: MHTAAAATPATSPRDILKAERAHLFAQFEQHANVNLLVTKLARAVDQALILLWQDEGMPDTCALVAVGGYGRGELFPHSDVDILLLLPQTADKALETRLEAFIGHCWDMGLDIGSSVRTVDECISEATQDVTVCTSLLEARLLTGDEGLYRTFETHYQGHLDAADFYQSKMLEMRQRHAKYQDTPYSLEPNCKESPGGLRDLQVILWMTRAAGFGSSWNELLVNQLLTRREAKELAANERLLKTIRARLHLLAGRRQDVLVFDLQTQLGEAFGYRPNAAKRTSEQLMRRYYWAAKAVTQLNTVVLQNIEARLFPTELGITRTINGRFVERQGMLEIADPELYQREPAAILETFLVYEQTRGVKGLAANTLRALYNARTQMDARWRRDPANRATFLSILQQPQGITHALRLMNQTSVLGRYLVNFRRIVGQMQHDLFHVYTVDQHILMVVRNVRRFAIVEHAHEFPFCSQLMANFDKPWVLTVAALFHDIAKGRGGDHSVLGMADARRFCKQHGIASEDADLIVWLVEHHLTMSQVAQKQDLGDPEVIRHFADQVGSERYLSALYLLTVADIRGTSPKVWNAWKAKLLEDLYRITLRVLGGATTDPHAVLEGRKEEARVLLRLAAMDPHAHEALWAQLDVGVFLRHDARDIAWFTRHFYNRVDTTLPIVRARISPVGEGLQVAVYSPDRPDLFARICGYFERKGLTILDAKIHTTKHGYALDTFQVADPGSGLVEPGHYRDIITLVEHELAELIARETVLAEPPRGRISRQSRSFPIKPRVDLRPDERGQYYLLSLSATDRTGLLYAIARVLARHRVSVHTARINTLGERVEDVFLLDGRRLTQDNKLQLALESELLEALAI.

The tract at residues 1–322 (MHTAAAATPA…FPTELGITRT (322 aa)) is uridylyltransferase. Residues 323 to 679 (INGRFVERQG…ARISPVGEGL (357 aa)) form a uridylyl-removing region. Residues 441-557 (VDQHILMVVR…RHFADQVGSE (117 aa)) form the HD domain. 2 ACT domains span residues 680–763 (QVAV…AEPP) and 792–861 (LLSL…ALAI).

This sequence belongs to the GlnD family. Mg(2+) serves as cofactor.

It catalyses the reaction [protein-PII]-L-tyrosine + UTP = [protein-PII]-uridylyl-L-tyrosine + diphosphate. It carries out the reaction [protein-PII]-uridylyl-L-tyrosine + H2O = [protein-PII]-L-tyrosine + UMP + H(+). With respect to regulation, uridylyltransferase (UTase) activity is inhibited by glutamine, while glutamine activates uridylyl-removing (UR) activity. Modifies, by uridylylation and deuridylylation, the PII regulatory proteins (GlnB and homologs), in response to the nitrogen status of the cell that GlnD senses through the glutamine level. Under low glutamine levels, catalyzes the conversion of the PII proteins and UTP to PII-UMP and PPi, while under higher glutamine levels, GlnD hydrolyzes PII-UMP to PII and UMP (deuridylylation). Thus, controls uridylylation state and activity of the PII proteins, and plays an important role in the regulation of nitrogen assimilation and metabolism. The protein is Bifunctional uridylyltransferase/uridylyl-removing enzyme of Ralstonia nicotianae (strain ATCC BAA-1114 / GMI1000) (Ralstonia solanacearum).